Consider the following 253-residue polypeptide: 28 kDa inner dynein arm light chain, axonemal (253 aa).

Residues 19-44 are disordered; the sequence is TSKDKGKGAKGTPGKKGALPPVEQKP. Residues 160–239 adopt a coiled-coil conformation; sequence IRKALQTEQG…LKQQLETFLV (80 aa).

Belongs to the inner dynein arm light chain family.

Its subcellular location is the cytoplasm. The protein resides in the cytoskeleton. It is found in the flagellum axoneme. In terms of biological role, plays a dynamic role in flagellar motility. May be necessary for stable assembly of a subset of inner dynein arms or for the binding of these arms to the outer doublet microtubules of the axoneme. The polypeptide is 28 kDa inner dynein arm light chain, axonemal (IDA4) (Chlamydomonas reinhardtii (Chlamydomonas smithii)).